Reading from the N-terminus, the 194-residue chain is Small ribosomal subunit protein uS7 (194 aa).

The protein belongs to the universal ribosomal protein uS7 family. In terms of assembly, part of the 30S ribosomal subunit.

Its function is as follows. One of the primary rRNA binding proteins, it binds directly to 16S rRNA where it nucleates assembly of the head domain of the 30S subunit. Is located at the subunit interface close to the decoding center. The chain is Small ribosomal subunit protein uS7 from Methanocorpusculum labreanum (strain ATCC 43576 / DSM 4855 / Z).